The primary structure comprises 242 residues: Biosynthetic peptidoglycan transglycosylase (242 aa).

Residues Ile-19 to Val-39 traverse the membrane as a helical segment.

It belongs to the glycosyltransferase 51 family.

The protein resides in the cell inner membrane. It carries out the reaction [GlcNAc-(1-&gt;4)-Mur2Ac(oyl-L-Ala-gamma-D-Glu-L-Lys-D-Ala-D-Ala)](n)-di-trans,octa-cis-undecaprenyl diphosphate + beta-D-GlcNAc-(1-&gt;4)-Mur2Ac(oyl-L-Ala-gamma-D-Glu-L-Lys-D-Ala-D-Ala)-di-trans,octa-cis-undecaprenyl diphosphate = [GlcNAc-(1-&gt;4)-Mur2Ac(oyl-L-Ala-gamma-D-Glu-L-Lys-D-Ala-D-Ala)](n+1)-di-trans,octa-cis-undecaprenyl diphosphate + di-trans,octa-cis-undecaprenyl diphosphate + H(+). Its pathway is cell wall biogenesis; peptidoglycan biosynthesis. Functionally, peptidoglycan polymerase that catalyzes glycan chain elongation from lipid-linked precursors. The polypeptide is Biosynthetic peptidoglycan transglycosylase (Salmonella paratyphi A (strain ATCC 9150 / SARB42)).